A 195-amino-acid chain; its full sequence is MALLTIGDQFPEYDLTAVVGGDLSKVDAKQPDDYFTRVTSKDYEGKWRIIFFWPKDFTFVCPTEIAAFGKLNEDFEDRDAKVLGVSVDNEFVHFQWRAQHEDLKTLPFPMVSDLKRELTAACGVLNADGVADRATFIVDPNNEVQFVSVTAGSVGRNVDEVLRVLDALQSDELCACNWKKGDPTINAGELLAGAV.

One can recognise a Thioredoxin domain in the interval 4–170 (LTIGDQFPEY…VLRVLDALQS (167 aa)). Lys-41 participates in a covalent cross-link: Isoglutamyl lysine isopeptide (Lys-Gln) (interchain with Q-Cter in protein Pup). The Cysteine sulfenic acid (-SOH) intermediate role is filled by Cys-61.

It belongs to the peroxiredoxin family. AhpC/Prx1 subfamily. In terms of assembly, homodimer; disulfide-linked, upon oxidation. 6 homodimers assemble to form a ring-like dodecamer. Identified in a complex with AhpD, DlaT and Lpd.

The protein resides in the cytoplasm. The enzyme catalyses N(6)-[(R)-dihydrolipoyl]-L-lysyl-[lipoyl-carrier protein] + a hydroperoxide = N(6)-[(R)-lipoyl]-L-lysyl-[lipoyl-carrier protein] + an alcohol + H2O. Thiol-specific peroxidase that catalyzes the reduction of hydrogen peroxide and organic hydroperoxides to water and alcohols, respectively. Plays a role in cell protection against oxidative stress by detoxifying peroxides. Together with AhpD, DlaT and Lpd, constitutes an NADH-dependent peroxidase active against hydrogen and alkyl peroxides as well as serving as a peroxynitrite reductase, thus protecting the bacterium against reactive nitrogen intermediates and oxidative stress generated by the host immune system. Does not however seem to play a role in detoxification of isoniazid. The sequence is that of Alkyl hydroperoxide reductase C from Mycolicibacterium smegmatis (strain ATCC 700084 / mc(2)155) (Mycobacterium smegmatis).